We begin with the raw amino-acid sequence, 119 residues long: NADH-quinone oxidoreductase subunit A (119 aa).

The next 3 membrane-spanning stretches (helical) occupy residues 7–27 (FPVLLFIIIGVGLGLALMTIG), 63–83 (LIAILFILFDLETAFLFPWGV), and 88–108 (IGWPGFFAMGVFLLEFLVGFV).

It belongs to the complex I subunit 3 family. NDH-1 is composed of 14 different subunits. Subunits NuoA, H, J, K, L, M, N constitute the membrane sector of the complex.

The protein localises to the cell inner membrane. It catalyses the reaction a quinone + NADH + 5 H(+)(in) = a quinol + NAD(+) + 4 H(+)(out). In terms of biological role, NDH-1 shuttles electrons from NADH, via FMN and iron-sulfur (Fe-S) centers, to quinones in the respiratory chain. The immediate electron acceptor for the enzyme in this species is believed to be ubiquinone. Couples the redox reaction to proton translocation (for every two electrons transferred, four hydrogen ions are translocated across the cytoplasmic membrane), and thus conserves the redox energy in a proton gradient. The protein is NADH-quinone oxidoreductase subunit A of Ralstonia nicotianae (strain ATCC BAA-1114 / GMI1000) (Ralstonia solanacearum).